We begin with the raw amino-acid sequence, 401 residues long: uncharacterized protein (401 aa).

[4Fe-4S] cluster contacts are provided by Cys7, Cys13, Cys16, and Cys94. S-adenosyl-L-methionine-binding residues include Gln230, Tyr259, Glu280, and Asp328. The active-site Nucleophile is Cys355.

The protein belongs to the class I-like SAM-binding methyltransferase superfamily. RNA M5U methyltransferase family.

This is an uncharacterized protein from Chlamydia pneumoniae (Chlamydophila pneumoniae).